The following is a 545-amino-acid chain: O-phosphoserine--tRNA(Cys) ligase (545 aa).

Substrate is bound by residues 189 to 191, 234 to 236, 276 to 277, and Asn-328; these read HMT, SAS, and YY.

The protein belongs to the class-II aminoacyl-tRNA synthetase family. O-phosphoseryl-tRNA(Cys) synthetase subfamily. As to quaternary structure, homotetramer. Interacts with SepCysS.

It carries out the reaction tRNA(Cys) + O-phospho-L-serine + ATP = O-phospho-L-seryl-tRNA(Cys) + AMP + diphosphate. Functionally, catalyzes the attachment of O-phosphoserine (Sep) to tRNA(Cys). This chain is O-phosphoserine--tRNA(Cys) ligase, found in Methanothrix thermoacetophila (strain DSM 6194 / JCM 14653 / NBRC 101360 / PT) (Methanosaeta thermophila).